Reading from the N-terminus, the 178-residue chain is Cytidylate kinase 2 (178 aa).

ATP is bound at residue 7–15 (GKSGCGNTT).

It belongs to the cytidylate kinase family. Type 2 subfamily.

The protein localises to the cytoplasm. The catalysed reaction is CMP + ATP = CDP + ADP. It catalyses the reaction dCMP + ATP = dCDP + ADP. This Borreliella afzelii (strain PKo) (Borrelia afzelii) protein is Cytidylate kinase 2.